Here is a 301-residue protein sequence, read N- to C-terminus: Glycine cleavage system transcriptional activator homolog (301 aa).

Residues 10–67 (PPLNSLKSFESAARYLSFTKAADELCVTQAAVSHQIKLLEXFLGIDLFKRKNRSLELT) form the HTH lysR-type domain. Positions 27-46 (FTKAADELCVTQAAVSHQIK) form a DNA-binding region, H-T-H motif.

This sequence belongs to the LysR transcriptional regulatory family.

It localises to the cytoplasm. Its function is as follows. Not known, the gcv operon regulated by the E.coli homolog does not exist in H.influenzae, so it probably acts as a transcriptional regulator on some other operon. The sequence is that of Glycine cleavage system transcriptional activator homolog (gcvA) from Haemophilus influenzae (strain ATCC 51907 / DSM 11121 / KW20 / Rd).